We begin with the raw amino-acid sequence, 155 residues long: Fibroblast growth factor 1 (155 aa).

Alanine 2 is modified (N-acetylalanine). The propeptide occupies 2 to 15; the sequence is AEGETTTFRALTEK. Asparagine 33 contacts heparin. The interval 127–143 is heparin-binding; that stretch reads KKNGSSKLGPRTHFGQK.

This sequence belongs to the heparin-binding growth factors family. As to quaternary structure, monomer. Homodimer. Interacts with FGFR1, FGFR2, FGFR3 and FGFR4. Affinity between fibroblast growth factors (FGFs) and their receptors is increased by heparan sulfate glycosaminoglycans that function as coreceptors. Found in a complex with FGFBP1, FGF1 and FGF2. Interacts with FGFBP1. Part of a Cu(2+)-dependent multiprotein aggregate containing FGF1, S100A13 and SYT1. Interacts with SYT1. Interacts with S100A13. Interacts with LRRC59. Interacts with CSNKA, CSNKB and FIBP. While binding with LRRC59, CSNKA and FIBP seem mutually exclusive, CSNKB and FIBP may cooperatively interact with FGF1. Forms a ternary complex with FGFR1 and ITGAV:ITGB3 and induces the recruitment of PTPN11 to the complex. Post-translationally, in the nucleus, phosphorylated by PKC/PRKCD.

It is found in the secreted. The protein resides in the cytoplasm. The protein localises to the cell cortex. Its subcellular location is the cytosol. It localises to the nucleus. Functionally, plays an important role in the regulation of cell survival, cell division, angiogenesis, cell differentiation and cell migration. Functions as a potent mitogen in vitro. Acts as a ligand for FGFR1 and integrins. Binds to FGFR1 in the presence of heparin leading to FGFR1 dimerization and activation via sequential autophosphorylation on tyrosine residues which act as docking sites for interacting proteins, leading to the activation of several signaling cascades. Binds to integrin ITGAV:ITGB3. Its binding to integrin, subsequent ternary complex formation with integrin and FGFR1, and the recruitment of PTPN11 to the complex are essential for FGF1 signaling. Induces the phosphorylation and activation of FGFR1, FRS2, MAPK3/ERK1, MAPK1/ERK2 and AKT1. Can induce angiogenesis. This Ovis aries (Sheep) protein is Fibroblast growth factor 1 (FGF1).